The sequence spans 149 residues: UPF0260 protein PA1299 (149 aa).

Belongs to the UPF0260 family.

The protein is UPF0260 protein PA1299 of Pseudomonas aeruginosa (strain ATCC 15692 / DSM 22644 / CIP 104116 / JCM 14847 / LMG 12228 / 1C / PRS 101 / PAO1).